A 193-amino-acid polypeptide reads, in one-letter code: Orotate phosphoribosyltransferase (193 aa).

Residue Glu114–Ser122 coordinates 5-phospho-alpha-D-ribose 1-diphosphate. Orotate contacts are provided by Thr118 and Arg146.

Belongs to the purine/pyrimidine phosphoribosyltransferase family. PyrE subfamily. As to quaternary structure, homodimer. Requires Mg(2+) as cofactor.

The catalysed reaction is orotidine 5'-phosphate + diphosphate = orotate + 5-phospho-alpha-D-ribose 1-diphosphate. It functions in the pathway pyrimidine metabolism; UMP biosynthesis via de novo pathway; UMP from orotate: step 1/2. In terms of biological role, catalyzes the transfer of a ribosyl phosphate group from 5-phosphoribose 1-diphosphate to orotate, leading to the formation of orotidine monophosphate (OMP). The polypeptide is Orotate phosphoribosyltransferase (Chlorobium phaeobacteroides (strain BS1)).